Here is a 559-residue protein sequence, read N- to C-terminus: Cytokine-like nuclear factor N-PAC (559 aa).

In terms of domain architecture, PWWP spans 9–70 (VNDLVWAKMK…ETQIKPYQEF (62 aa)). The interval 106 to 137 (SEQDNRPDPDVEFNKLREGGTESGEETTVNNT) is disordered. The span at 108 to 125 (QDNRPDPDVEFNKLREGG) shows a compositional bias: basic and acidic residues. The interval 267-559 (RNIQASNLKF…SSAVYVRARF (293 aa)) is dehydrogenase domain. NAD(+)-binding positions include 277–291 (GFLGLGIMGCGMVKN) and Lys-511.

It belongs to the HIBADH-related family. NP60 subfamily. In terms of assembly, binds to mononucleosomes.

The protein localises to the chromosome. Functionally, nucleosome-destabilizing factor that is recruited to genes during transcriptional activation and colocalizes with a subset of trimethylated 'Lys-36' histone H3 (H3K36me3)-enriched regions. This is Cytokine-like nuclear factor N-PAC from Aedes aegypti (Yellowfever mosquito).